A 131-amino-acid polypeptide reads, in one-letter code: Dihydroneopterin aldolase 2 (131 aa).

Residues glutamate 29, tyrosine 61, and 80–81 (LE) each bind substrate. The active-site Proton donor/acceptor is the lysine 107.

The protein belongs to the DHNA family. As to quaternary structure, homooctamer. Forms a hollow cylinder assembled from two ring-shaped tetramers. In terms of tissue distribution, expressed in roots, leaves, stems and siliques.

It carries out the reaction 7,8-dihydroneopterin = 6-hydroxymethyl-7,8-dihydropterin + glycolaldehyde. Its pathway is cofactor biosynthesis; tetrahydrofolate biosynthesis; 2-amino-4-hydroxy-6-hydroxymethyl-7,8-dihydropteridine diphosphate from 7,8-dihydroneopterin triphosphate: step 3/4. Catalyzes the conversion of 7,8-dihydroneopterin into 6-hydroxymethyl-7,8-dihydropterin, a biosynthetic precursor of the vitamin tetrahydrofolate. Can use L-threo-dihydroneopterin and D-erythro-dihydroneopterin as substrates for the formation of 6-hydroxymethyldihydropterin, but it can also catalyze the epimerization of carbon 2' of dihydroneopterin and dihydromonapterin. The polypeptide is Dihydroneopterin aldolase 2 (Arabidopsis thaliana (Mouse-ear cress)).